The following is a 293-amino-acid chain: Phosphate import ATP-binding protein PstB (293 aa).

The ABC transporter domain occupies Met46–Ile288. Gly78–Ser85 contacts ATP.

The protein belongs to the ABC transporter superfamily. Phosphate importer (TC 3.A.1.7) family. In terms of assembly, the complex is composed of two ATP-binding proteins (PstB), two transmembrane proteins (PstC and PstA) and a solute-binding protein (PstS).

The protein resides in the cell inner membrane. It carries out the reaction phosphate(out) + ATP + H2O = ADP + 2 phosphate(in) + H(+). In terms of biological role, part of the ABC transporter complex PstSACB involved in phosphate import. Responsible for energy coupling to the transport system. The polypeptide is Phosphate import ATP-binding protein PstB (Desulfotalea psychrophila (strain LSv54 / DSM 12343)).